A 439-amino-acid polypeptide reads, in one-letter code: Probable E3 ubiquitin-protein ligase makorin-1 (439 aa).

C3H1-type zinc fingers lie at residues 18-45 (WTKHVTCRYFMHGLCKEGENCRYSHDLS), 48-74 (KQTMICKFFQKGCCAFGDRCRYEHTKP), and 163-190 (EMKKQLCPYAAVGECRYGLNCAYLHGDV). Residues 73 to 118 (KPSKQDEVPSSKPSMPLTAAPLAGTPEPVSDGPGGTTGAQEKPQGS) are disordered. Positions 191 to 218 (CDMCGLQVLHPSDTSQRSQHIRACIEAH) are makorin-type Cys-His. The RING-type zinc-finger motif lies at 236-290 (CGVCMEVVFEKTNPSERRFGILSNCCHCYCLKCIRKWRSAKQFESKIIKSCPECR). The C3H1-type 4 zinc finger occupies 319–348 (GMGTKPCRYFDEGRGTCPFGANCFYKHAFP). The segment at 352 to 371 (LEEPQPQRRQNGSNGRNRNT) is disordered. The span at 358-368 (QRRQNGSNGRN) shows a compositional bias: low complexity.

The enzyme catalyses S-ubiquitinyl-[E2 ubiquitin-conjugating enzyme]-L-cysteine + [acceptor protein]-L-lysine = [E2 ubiquitin-conjugating enzyme]-L-cysteine + N(6)-ubiquitinyl-[acceptor protein]-L-lysine.. It functions in the pathway protein modification; protein ubiquitination. In terms of biological role, E3 ubiquitin ligase catalyzing the covalent attachment of ubiquitin moieties onto substrate proteins. The chain is Probable E3 ubiquitin-protein ligase makorin-1 from Danio rerio (Zebrafish).